The chain runs to 161 residues: Probable ribosome biogenesis protein RLP24 (161 aa).

This sequence belongs to the eukaryotic ribosomal protein eL24 family. Associated with nucleolar and cytoplasmic pre-60S particles. At the end of biogenesis it dissociates from cytoplasmic pre-60S particles and is likely to be exchanged for its ribosomal homolog, RPL24.

It localises to the nucleus. The protein resides in the nucleolus. Functionally, involved in the biogenesis of the 60S ribosomal subunit. Ensures the docking of GTPBP4/NOG1 to pre-60S particles. The chain is Probable ribosome biogenesis protein RLP24 (rsl24d1) from Danio rerio (Zebrafish).